Here is a 1012-residue protein sequence, read N- to C-terminus: PHD finger protein 20 (1012 aa).

2 Tudor domains span residues histidine 4–glutamate 69 and glycine 83–arginine 147. The interval isoleucine 142–threonine 336 is disordered. The segment covering arginine 147–isoleucine 245 has biased composition (basic and acidic residues). The residue at position 159 (serine 159) is a Phosphoserine. Positions lysine 257–threonine 269 form a DNA-binding region, a.T hook. Polar residues predominate over residues valine 271–proline 280. Basic and acidic residues predominate over residues proline 297–arginine 325. The C2H2-type zinc-finger motif lies at phenylalanine 452–histidine 477. Over residues lysine 481–glycine 490 the composition is skewed to basic and acidic residues. The interval lysine 481–aspartate 611 is disordered. Position 488 is a phosphoserine (serine 488). A compositionally biased stretch (polar residues) spans arginine 497–threonine 509. A compositionally biased stretch (basic and acidic residues) spans threonine 522–arginine 538. Positions valine 539–threonine 551 are enriched in basic residues. Residues arginine 654–proline 700 form a PHD-type zinc finger. Position 843 is an N6-acetyllysine (lysine 843). The interval aspartate 866–lysine 912 is disordered. Serine 878 and serine 880 each carry phosphoserine. Residues aspartate 888–lysine 912 show a composition bias toward basic and acidic residues.

In terms of assembly, homodimer; disulfide-linked. Component of some MLL1/MLL complex, at least composed of the core components KMT2A/MLL1, ASH2L, HCFC1, WDR5 and RBBP5, as well as the facultative components BACC1, CHD8, E2F6, HSP70, INO80C, KANSL1, LAS1L, MAX, MCRS1, MGA, KAT8/MOF, PELP1, PHF20, PRP31, RING2, RUVB1/TIP49A, RUVB2/TIP49B, SENP3, TAF1, TAF4, TAF6, TAF7, TAF9 and TEX10. Component of the NSL complex at least composed of MOF/KAT8, KANSL1, KANSL2, KANSL3, MCRS1, PHF20, OGT1/OGT, WDR5 and HCFC1. Post-translationally, ubiquitinated by TRIM26; leading to proteasomal degradation. In terms of tissue distribution, expressed in heart, kidney, liver, lung, pancreas, placenta, spleen and testis. Not expressed in brain, skeletal muscle, colon, ovary, prostate, small intestine and thymus. Expressed in colon and ovary cancer cell lines while it is not expressed in the respective normal tissues.

The protein resides in the nucleus. In terms of biological role, methyllysine-binding protein, component of the MOF histone acetyltransferase protein complex. Not required for maintaining the global histone H4 'Lys-16' acetylation (H4K16ac) levels or locus specific histone acetylation, but instead works downstream in transcriptional regulation of MOF target genes. As part of the NSL complex it may be involved in acetylation of nucleosomal histone H4 on several lysine residues. Contributes to methyllysine-dependent p53/TP53 stabilization and up-regulation after DNA damage. In Homo sapiens (Human), this protein is PHD finger protein 20 (PHF20).